Reading from the N-terminus, the 623-residue chain is MAU2 chromatid cohesion factor homolog (623 aa).

TPR repeat units lie at residues 96–129 (FDTA…SQNN), 451–484 (GGFY…ANAE), and 491–524 (SCSL…ASKI).

It belongs to the SCC4/mau-2 family. In terms of assembly, interacts with Nipped-B to form the cohesin loading complex.

It localises to the nucleus. It is found in the nucleoplasm. Its function is as follows. Required for association of the cohesin complex with chromatin during interphase. Plays a role in sister chromatid cohesion and normal progression through prometaphase. In Drosophila grimshawi (Hawaiian fruit fly), this protein is MAU2 chromatid cohesion factor homolog.